Reading from the N-terminus, the 271-residue chain is Phosphate import ATP-binding protein PstB 1 (271 aa).

An ABC transporter domain is found at 25–266 (LTVEHLNLYY…PTQRRTEDYI (242 aa)). 57 to 64 (GPSGCGKS) contributes to the ATP binding site.

The protein belongs to the ABC transporter superfamily. Phosphate importer (TC 3.A.1.7) family. In terms of assembly, the complex is composed of two ATP-binding proteins (PstB), two transmembrane proteins (PstC and PstA) and a solute-binding protein (PstS).

It is found in the cell inner membrane. It catalyses the reaction phosphate(out) + ATP + H2O = ADP + 2 phosphate(in) + H(+). Part of the ABC transporter complex PstSACB involved in phosphate import. Responsible for energy coupling to the transport system. This Pectobacterium atrosepticum (strain SCRI 1043 / ATCC BAA-672) (Erwinia carotovora subsp. atroseptica) protein is Phosphate import ATP-binding protein PstB 1.